Consider the following 58-residue polypeptide: Small ribosomal subunit protein bS21 (58 aa).

A disordered region spans residues 25-58 (SKSGTLQEYRKREHYEKPSVKRKKKSEAARKRKF). Positions 32–43 (EYRKREHYEKPS) are enriched in basic and acidic residues. Basic residues predominate over residues 44–58 (VKRKKKSEAARKRKF).

The protein belongs to the bacterial ribosomal protein bS21 family.

This Oceanobacillus iheyensis (strain DSM 14371 / CIP 107618 / JCM 11309 / KCTC 3954 / HTE831) protein is Small ribosomal subunit protein bS21.